The sequence spans 109 residues: Aquaporin-2 (109 aa).

Residues Ser1–Arg6 are Cytoplasmic-facing. A helical membrane pass occupies residues Ala7–Leu27. Over Asn28 to Ser35 the chain is Extracellular. A helical membrane pass occupies residues Val36–Leu54. Residues Gly55 to Gly59 lie on the Cytoplasmic side of the membrane. An intramembrane region (discontinuously helical) is located at residues Ala60–Ala69. The NPA 1 signature appears at Asn63–Ala65. Topologically, residues Cys70 to Arg80 are cytoplasmic. A helical transmembrane segment spans residues Ala81–Leu102. The Extracellular portion of the chain corresponds to Thr103 to Gly109.

Belongs to the MIP/aquaporin (TC 1.A.8) family. In terms of assembly, homotetramer. In terms of processing, serine phosphorylation is necessary and sufficient for expression at the apical membrane. Endocytosis is not phosphorylation-dependent. N-glycosylated.

It localises to the apical cell membrane. The protein localises to the basolateral cell membrane. The protein resides in the cell membrane. Its subcellular location is the cytoplasmic vesicle membrane. It is found in the golgi apparatus. It localises to the trans-Golgi network membrane. It carries out the reaction H2O(in) = H2O(out). It catalyses the reaction glycerol(in) = glycerol(out). Its function is as follows. Forms a water-specific channel that provides the plasma membranes of renal collecting duct with high permeability to water, thereby permitting water to move in the direction of an osmotic gradient. Plays an essential role in renal water homeostasis. Could also be permeable to glycerol. This chain is Aquaporin-2, found in Amblysomus hottentotus (Hottentot golden mole).